A 221-amino-acid polypeptide reads, in one-letter code: Ribosomal RNA small subunit methyltransferase G (221 aa).

S-adenosyl-L-methionine contacts are provided by residues Gly-83, Phe-88, 132-133, and Arg-146; that span reads LE.

This sequence belongs to the methyltransferase superfamily. RNA methyltransferase RsmG family.

Its subcellular location is the cytoplasm. The enzyme catalyses guanosine(527) in 16S rRNA + S-adenosyl-L-methionine = N(7)-methylguanosine(527) in 16S rRNA + S-adenosyl-L-homocysteine. Specifically methylates the N7 position of guanine in position 527 of 16S rRNA. This Zymomonas mobilis subsp. mobilis (strain ATCC 31821 / ZM4 / CP4) protein is Ribosomal RNA small subunit methyltransferase G.